The primary structure comprises 305 residues: MRPLAIIGPTGTGKSALALDVAERLGGEIGVEIVNADAMQLYRGMDIGTAKLPAAQRRGVPHHQLDVLDVTETASVARYQSEAARDIETIAARGAVPIIVGGSMMYVQALLDDWAFPATDPAVRARWEQRLVEVGVATLHGELGKVDPDAAASILPTDGRRIVRALEVVELTGQPFAASAPTIGAPRWDTAIIGLDWETSVLDERLAARTDSMFAEGLVAEVAGLLRHGLREGVTASRALGYAQVLADLDAGGDGSAAREPTFVGTRRYVRRQRSWFRRDHRVCWLDGGSPDNVDRTLRAWRAVS.

8 to 15 (GPTGTGKS) contributes to the ATP binding site. 10-15 (TGTGKS) is a substrate binding site.

Belongs to the IPP transferase family. Monomer. Mg(2+) serves as cofactor.

The enzyme catalyses adenosine(37) in tRNA + dimethylallyl diphosphate = N(6)-dimethylallyladenosine(37) in tRNA + diphosphate. Functionally, catalyzes the transfer of a dimethylallyl group onto the adenine at position 37 in tRNAs that read codons beginning with uridine, leading to the formation of N6-(dimethylallyl)adenosine (i(6)A). The sequence is that of tRNA dimethylallyltransferase from Mycobacterium sp. (strain JLS).